Reading from the N-terminus, the 291-residue chain is Beta-lactamase CTX-M-1 (291 aa).

The signal sequence occupies residues 1–28 (MVKKSLRQFTLMATATVTLLLGSVPLYA). Residue serine 73 is the Nucleophile; acyl-ester intermediate of the active site. Positions 76, 133, 169, and 240 each coordinate a beta-lactam. Glutamate 169 functions as the Proton acceptor in the catalytic mechanism.

It belongs to the class-A beta-lactamase family. In terms of assembly, monomer.

It is found in the secreted. It catalyses the reaction a beta-lactam + H2O = a substituted beta-amino acid. With respect to regulation, inhibited by the beta-lactamase-blocking agent clavulanic acid; in the TG1 strain. Extended-spectrum beta-lactamase (ESBL) which confers resistance to penicillins, as well as first, second and third-generation cephalosporins. Has cefotaxime-hydrolyzing activity. Inactive against the cephamycin antibiotic, cefoxitin, or against the carbapenem, imipenem. This chain is Beta-lactamase CTX-M-1, found in Escherichia coli.